Consider the following 510-residue polypeptide: RNA-splicing ligase RtcB homolog (510 aa).

Mn(2+) is bound by residues aspartate 124, cysteine 127, histidine 232, histidine 264, and histidine 358. 231–235 serves as a coordination point for GMP; the sequence is NHYAE. GMP-binding positions include 358–359, 407–410, serine 414, 433–436, and lysine 509; these read HN, GGTM, and HGAG. Catalysis depends on histidine 433, which acts as the GMP-histidine intermediate.

It belongs to the RtcB family. In terms of assembly, catalytic component of the tRNA-splicing ligase complex. Requires Mn(2+) as cofactor.

It catalyses the reaction a 3'-end 3'-phospho-ribonucleotide-RNA + a 5'-end dephospho-ribonucleoside-RNA + GTP = a ribonucleotidyl-ribonucleotide-RNA + GMP + diphosphate. The enzyme catalyses a 3'-end 2',3'-cyclophospho-ribonucleotide-RNA + a 5'-end dephospho-ribonucleoside-RNA + GTP + H2O = a ribonucleotidyl-ribonucleotide-RNA + GMP + diphosphate + H(+). Functionally, catalytic subunit of the tRNA-splicing ligase complex that acts by directly joining spliced tRNA halves to mature-sized tRNAs by incorporating the precursor-derived splice junction phosphate into the mature tRNA as a canonical 3',5'-phosphodiester. May act as an RNA ligase with broad substrate specificity, and may function toward other RNAs. This Trichoplax adhaerens (Trichoplax reptans) protein is RNA-splicing ligase RtcB homolog.